A 357-amino-acid polypeptide reads, in one-letter code: Sorbitol dehydrogenase (357 aa).

Ala2 is subject to N-acetylalanine. Cys45 contacts Zn(2+). Position 51 (Tyr51) interacts with substrate. Zn(2+) contacts are provided by His70 and Glu71. Glu156 is a substrate binding site. NAD(+) contacts are provided by Ile184, Asp204, and Arg209. Phosphoserine occurs at positions 211 and 225. Residues 273-275 (VGL) and 297-299 (VFR) each bind NAD(+). Arg299 and Tyr300 together coordinate substrate.

Belongs to the zinc-containing alcohol dehydrogenase family. In terms of assembly, homotetramer. The cofactor is Zn(2+). As to expression, expressed in liver. Expressed in kidney and epithelial cells of both benign and malignant prostate tissue. Expressed in epididymis (at protein level).

Its subcellular location is the mitochondrion membrane. The protein localises to the cell projection. It is found in the cilium. It localises to the flagellum. The enzyme catalyses keto-D-fructose + NADH + H(+) = D-sorbitol + NAD(+). It carries out the reaction L-threitol + NAD(+) = L-erythrulose + NADH + H(+). It catalyses the reaction xylitol + NAD(+) = D-xylulose + NADH + H(+). The catalysed reaction is ribitol + NAD(+) = D-ribulose + NADH + H(+). The enzyme catalyses (R,R)-butane-2,3-diol + NAD(+) = (R)-acetoin + NADH + H(+). It carries out the reaction L-iditol + NAD(+) = keto-L-sorbose + NADH + H(+). With respect to regulation, inhibited by CP-166,572, an inhibitor that is competitive with fructose. Also competitively inhibited by phenanthroline and 4-methylpyrazole in vitro. In terms of biological role, polyol dehydrogenase that catalyzes the reversible NAD(+)-dependent oxidation of various sugar alcohols. Is mostly active with D-sorbitol (D-glucitol), L-threitol, xylitol and ribitol as substrates, leading to the C2-oxidized products D-fructose, L-erythrulose, D-xylulose, and D-ribulose, respectively. Is a key enzyme in the polyol pathway that interconverts glucose and fructose via sorbitol, which constitutes an important alternate route for glucose metabolism. The polyol pathway is believed to be involved in the etiology of diabetic complications, such as diabetic neuropathy and retinopathy, induced by hyperglycemia. May play a role in sperm motility by using sorbitol as an alternative energy source for sperm motility. May have a more general function in the metabolism of secondary alcohols since it also catalyzes the stereospecific oxidation of (2R,3R)-2,3-butanediol. To a lesser extent, can also oxidize L-arabinitol, galactitol and D-mannitol and glycerol in vitro. Oxidizes neither ethanol nor other primary alcohols. Cannot use NADP(+) as the electron acceptor. This is Sorbitol dehydrogenase (SORD) from Homo sapiens (Human).